The primary structure comprises 524 residues: General transcription factor IIF subunit 1 (524 aa).

Disordered regions lie at residues 56 to 76 and 181 to 462; these read MYQE…RKQR and RLKD…IQLT. Residues 242–257 are compositionally biased toward basic residues; that stretch reads KPQKKVPAKGGKKKKR. Residues 262–289 show a composition bias toward acidic residues; the sequence is EALEDSDDGDFEGQEVDYMSDESSSDEE. Positions 290–307 are enriched in basic and acidic residues; sequence LPGKIKPAKEEEGPKGLD. 2 stretches are compositionally biased toward acidic residues: residues 308-327 and 347-358; these read EQSE…EEGE and SDESETSEDSDI. A compositionally biased stretch (basic residues) spans 368-378; it reads QKKKTPPKKDK. Positions 381 to 397 are enriched in low complexity; that stretch reads GSNSSSRGNSRPGTPSP. Residues 436–459 are compositionally biased toward polar residues; it reads PQNTSGKSTPQPQSGKSTPSSGDI.

Belongs to the TFIIF alpha subunit family. As to quaternary structure, heterodimer of an alpha and a beta subunit. Post-translationally, phosphorylated on Ser and other residues by TAF1 and casein kinase II-like kinases.

The protein resides in the nucleus. Its function is as follows. TFIIF is a general transcription initiation factor that binds to RNA polymerase II and helps to recruit it to the initiation complex in collaboration with TFIIB. It promotes transcription elongation. This is General transcription factor IIF subunit 1 (gtf2f1) from Xenopus laevis (African clawed frog).